Here is a 1288-residue protein sequence, read N- to C-terminus: Contactin-associated protein-like 3B (1288 aa).

A signal peptide spans 1 to 25; that stretch reads MASVAWAVLKVLLLLPTQTWSPVGA. The disordered stretch occupies residues 23-61; the sequence is VGAGNPPDCDSPLASALPRSSFSSSSELSSSHGPGFSRL. Topologically, residues 26–1245 are extracellular; it reads GNPPDCDSPL…LVNADRRDSA (1220 aa). The region spanning 31–177 is the F5/8 type C domain; the sequence is CDSPLASALP…IGMRIEVYGC (147 aa). 6 disulfides stabilise this stretch: Cys31–Cys177, Cys332–Cys364, Cys513–Cys545, Cys551–Cys562, Cys556–Cys571, and Cys573–Cys583. A compositionally biased stretch (low complexity) spans 33-59; sequence SPLASALPRSSFSSSSELSSSHGPGFS. Laminin G-like domains lie at 183–364 and 370–545; these read VVYF…SFSC and VPVT…IDSC. An N-linked (GlcNAc...) asparagine glycan is attached at Asn359. Positions 547–584 constitute an EGF-like 1 domain; the sequence is ITDRCLPSYCEHGGECSQSWDTFSCDCLGTGYTGETCH. Residues 585 to 792 enclose the Fibrinogen C-terminal domain; it reads SSLYEQSCEA…LLCRGDKSFW (208 aa). An N-linked (GlcNAc...) asparagine glycan is attached at Asn706. One can recognise a Laminin G-like 3 domain in the interval 793–958; it reads NSASFNTETS…TVTPGVEPGC (166 aa). 5 disulfide bridges follow: Cys931–Cys958, Cys962–Cys975, Cys969–Cys984, Cys986–Cys996, and Cys1167–Cys1203. Residues 959 to 997 form the EGF-like 2 domain; the sequence is AGHCSTYGHLCRNGGRCREKRRGVTCDCAFSAYDGPFCS. The region spanning 1016-1203 is the Laminin G-like 4 domain; the sequence is EHYTLSENSS…RGHVAPMARC (188 aa). The tract at residues 1215-1236 is disordered; it reads ELAPRLAGGAGRSGPVDEGEPL. A helical membrane pass occupies residues 1246–1266; that stretch reads VIGGVIAVEIFILLCITAIAI. At 1267 to 1288 the chain is on the cytoplasmic side; sequence RIYQQRKLRKENESKVSKKEEC.

The protein belongs to the neurexin family.

It localises to the membrane. This Homo sapiens (Human) protein is Contactin-associated protein-like 3B (CNTNAP3B).